We begin with the raw amino-acid sequence, 119 residues long: Large ribosomal subunit protein bL20 (119 aa).

This sequence belongs to the bacterial ribosomal protein bL20 family.

Its function is as follows. Binds directly to 23S ribosomal RNA and is necessary for the in vitro assembly process of the 50S ribosomal subunit. It is not involved in the protein synthesizing functions of that subunit. This Geobacillus stearothermophilus (Bacillus stearothermophilus) protein is Large ribosomal subunit protein bL20 (rplT).